Consider the following 72-residue polypeptide: uncharacterized protein (72 aa).

A helical membrane pass occupies residues 46–66; that stretch reads AIFVFNLCFIPNLCVACIFNV.

It localises to the membrane. This is an uncharacterized protein from Saccharomyces cerevisiae (strain ATCC 204508 / S288c) (Baker's yeast).